The following is a 99-amino-acid chain: Nucleoid-associated protein EbfC (99 aa).

Belongs to the YbaB/EbfC family. In terms of assembly, homodimer.

It localises to the cytoplasm. The protein localises to the nucleoid. Binds to DNA and alters its conformation. May be involved in regulation of gene expression, nucleoid organization and DNA protection. This Borreliella afzelii (strain PKo) (Borrelia afzelii) protein is Nucleoid-associated protein EbfC.